A 296-amino-acid polypeptide reads, in one-letter code: MIKQYLQVTKPGIIFGNLISVIGGFLLAAQGRIDYPLFLATLVGVSLVVASGCVFNNVIDRDIDKKMERTKNRVLVKGLISLKVTLVYASLLGIAGFALLYVAANPLAMWLAVMGFVVYVGVYSLYMKRHSVYGTLIGSLSGAAPPVIGYCAVSNQFDAGALILLLIFSLWQMPHSYAIAIFRFKDYQAANIPVLPVVKGISVAKNHITLYIVAFAIATLMLSLGGYAGYKYLIVAAAVSVWWLGMALSGYKNAIDDRVWARKLFVFSIVAITSLSVMMSVDSMAPAHEVLLTYLR.

A run of 9 helical transmembrane segments spans residues Pro11–Gly31, Tyr35–Phe55, Val84–Ala104, Leu107–Met127, Val132–Ala152, Leu162–Phe182, Ile208–Ala228, Gly229–Ser249, and Leu264–Met284.

The protein belongs to the UbiA prenyltransferase family. Protoheme IX farnesyltransferase subfamily.

The protein localises to the cell inner membrane. It catalyses the reaction heme b + (2E,6E)-farnesyl diphosphate + H2O = Fe(II)-heme o + diphosphate. It participates in porphyrin-containing compound metabolism; heme O biosynthesis; heme O from protoheme: step 1/1. Functionally, converts heme B (protoheme IX) to heme O by substitution of the vinyl group on carbon 2 of heme B porphyrin ring with a hydroxyethyl farnesyl side group. The sequence is that of Protoheme IX farnesyltransferase from Pectobacterium atrosepticum (strain SCRI 1043 / ATCC BAA-672) (Erwinia carotovora subsp. atroseptica).